Consider the following 293-residue polypeptide: Ribosomal RNA small subunit methyltransferase H (293 aa).

S-adenosyl-L-methionine contacts are provided by residues 32-34, aspartate 51, phenylalanine 78, aspartate 99, and glutamine 106; that span reads GGH. The tract at residues 271–293 is disordered; the sequence is PGTEEIRENPPSRSAKLRVAKRI.

This sequence belongs to the methyltransferase superfamily. RsmH family.

It localises to the cytoplasm. The catalysed reaction is cytidine(1402) in 16S rRNA + S-adenosyl-L-methionine = N(4)-methylcytidine(1402) in 16S rRNA + S-adenosyl-L-homocysteine + H(+). Functionally, specifically methylates the N4 position of cytidine in position 1402 (C1402) of 16S rRNA. The chain is Ribosomal RNA small subunit methyltransferase H from Persephonella marina (strain DSM 14350 / EX-H1).